The primary structure comprises 760 residues: Probable 3',5'-cyclic phosphodiesterase pde-6 (760 aa).

2 disordered regions span residues 1-47 and 410-429; these read MGDR…AATA and KRSVVDAHREKRGSHGERRR. Positions 33 to 47 are enriched in low complexity; the sequence is PAARRGAQRAPAATA. Residues 412–429 show a composition bias toward basic and acidic residues; sequence SVVDAHREKRGSHGERRR. The region spanning 426-750 is the PDEase domain; sequence ERRRVSADVK…EKWKVMTSQW (325 aa). Residue H502 is the Proton donor of the active site. A divalent metal cation contacts are provided by H506, H542, D543, and D656.

This sequence belongs to the cyclic nucleotide phosphodiesterase family. It depends on a divalent metal cation as a cofactor.

The enzyme catalyses a nucleoside 3',5'-cyclic phosphate + H2O = a nucleoside 5'-phosphate + H(+). The sequence is that of Probable 3',5'-cyclic phosphodiesterase pde-6 (pde-6) from Caenorhabditis elegans.